The sequence spans 381 residues: Putative glutamate--cysteine ligase 2 (381 aa).

Belongs to the glutamate--cysteine ligase type 2 family. YbdK subfamily.

The enzyme catalyses L-cysteine + L-glutamate + ATP = gamma-L-glutamyl-L-cysteine + ADP + phosphate + H(+). Functionally, ATP-dependent carboxylate-amine ligase which exhibits weak glutamate--cysteine ligase activity. In Polaromonas naphthalenivorans (strain CJ2), this protein is Putative glutamate--cysteine ligase 2.